The following is a 6668-amino-acid chain: Centrosome-associated protein CEP250 (6668 aa).

Coiled coils occupy residues 562 to 589, 632 to 666, 873 to 988, 1042 to 1087, 1252 to 1307, 1333 to 1427, 1501 to 1538, 1594 to 1688, 1896 to 1930, 1975 to 2224, 2298 to 3272, 3298 to 3436, 3526 to 3599, 3697 to 3773, 3856 to 4137, 4170 to 4486, 4515 to 5078, 5165 to 5202, 5298 to 5731, and 5927 to 6119; these read KAFH…LQQD, TREL…LRAS, HTEC…LRSS, LRMS…HEAA, VEDL…AVSR, LESL…LEKK, RPAA…LGTQ, REAL…SEVA, HDIL…TTEK, EETL…AKQS, AEDE…LKME, QQEL…SRAE, LVQL…AKEE, CASL…EERR, TEML…VEAE, RRKL…LRER, LETL…FRRR, LASL…QETL, LREK…QHRV, and TQAL…LWRQ.

Proteolytically cleaved; only the full-length form localizes to the inner core, while processed version also localizes to the outer core during the onset of cell division.

It is found in the cytoplasm. The protein resides in the cytoskeleton. The protein localises to the microtubule organizing center. Its subcellular location is the centrosome. Its function is as follows. Part of the centrosome inner core complex. Required for the linking of centrosomal inner and outer cores. The protein is Centrosome-associated protein CEP250 of Toxoplasma gondii (strain ATCC 50611 / Me49).